The sequence spans 292 residues: Ribosomal RNA small subunit methyltransferase A (292 aa).

Residues asparagine 28, leucine 30, glycine 55, glutamate 77, aspartate 103, and asparagine 123 each coordinate S-adenosyl-L-methionine.

Belongs to the class I-like SAM-binding methyltransferase superfamily. rRNA adenine N(6)-methyltransferase family. RsmA subfamily.

It is found in the cytoplasm. The catalysed reaction is adenosine(1518)/adenosine(1519) in 16S rRNA + 4 S-adenosyl-L-methionine = N(6)-dimethyladenosine(1518)/N(6)-dimethyladenosine(1519) in 16S rRNA + 4 S-adenosyl-L-homocysteine + 4 H(+). Its function is as follows. Specifically dimethylates two adjacent adenosines (A1518 and A1519) in the loop of a conserved hairpin near the 3'-end of 16S rRNA in the 30S particle. May play a critical role in biogenesis of 30S subunits. This Methylobacterium radiotolerans (strain ATCC 27329 / DSM 1819 / JCM 2831 / NBRC 15690 / NCIMB 10815 / 0-1) protein is Ribosomal RNA small subunit methyltransferase A.